Here is a 185-residue protein sequence, read N- to C-terminus: UPF0301 protein HCH_00550 (185 aa).

This sequence belongs to the UPF0301 (AlgH) family.

The chain is UPF0301 protein HCH_00550 from Hahella chejuensis (strain KCTC 2396).